The following is a 272-amino-acid chain: S-adenosylmethionine decarboxylase proenzyme (272 aa).

The Schiff-base intermediate with substrate; via pyruvic acid role is filled by serine 122. Serine 122 carries the pyruvic acid (Ser); by autocatalysis modification. Histidine 127 acts as the Proton acceptor; for processing activity in catalysis. Cysteine 150 functions as the Proton donor; for catalytic activity in the catalytic mechanism.

Belongs to the prokaryotic AdoMetDC family. Type 2 subfamily. In terms of assembly, heterooctamer of four alpha and four beta chains arranged as a tetramer of alpha/beta heterodimers. Requires pyruvate as cofactor. Is synthesized initially as an inactive proenzyme. Formation of the active enzyme involves a self-maturation process in which the active site pyruvoyl group is generated from an internal serine residue via an autocatalytic post-translational modification. Two non-identical subunits are generated from the proenzyme in this reaction, and the pyruvate is formed at the N-terminus of the alpha chain, which is derived from the carboxyl end of the proenzyme. The post-translation cleavage follows an unusual pathway, termed non-hydrolytic serinolysis, in which the side chain hydroxyl group of the serine supplies its oxygen atom to form the C-terminus of the beta chain, while the remainder of the serine residue undergoes an oxidative deamination to produce ammonia and the pyruvoyl group blocking the N-terminus of the alpha chain.

The enzyme catalyses S-adenosyl-L-methionine + H(+) = S-adenosyl 3-(methylsulfanyl)propylamine + CO2. Its pathway is amine and polyamine biosynthesis; S-adenosylmethioninamine biosynthesis; S-adenosylmethioninamine from S-adenosyl-L-methionine: step 1/1. Its function is as follows. Catalyzes the decarboxylation of S-adenosylmethionine to S-adenosylmethioninamine (dcAdoMet), the propylamine donor required for the synthesis of the polyamines spermine and spermidine from the diamine putrescine. The sequence is that of S-adenosylmethionine decarboxylase proenzyme from Clostridium botulinum (strain Eklund 17B / Type B).